A 462-amino-acid chain; its full sequence is ATP synthase subunit beta (462 aa).

Residue 152-159 participates in ATP binding; it reads GGAGVGKT.

The protein belongs to the ATPase alpha/beta chains family. F-type ATPases have 2 components, CF(1) - the catalytic core - and CF(0) - the membrane proton channel. CF(1) has five subunits: alpha(3), beta(3), gamma(1), delta(1), epsilon(1). CF(0) has three main subunits: a(1), b(2) and c(9-12). The alpha and beta chains form an alternating ring which encloses part of the gamma chain. CF(1) is attached to CF(0) by a central stalk formed by the gamma and epsilon chains, while a peripheral stalk is formed by the delta and b chains.

The protein localises to the cell inner membrane. It carries out the reaction ATP + H2O + 4 H(+)(in) = ADP + phosphate + 5 H(+)(out). In terms of biological role, produces ATP from ADP in the presence of a proton gradient across the membrane. The catalytic sites are hosted primarily by the beta subunits. The sequence is that of ATP synthase subunit beta from Aeromonas hydrophila subsp. hydrophila (strain ATCC 7966 / DSM 30187 / BCRC 13018 / CCUG 14551 / JCM 1027 / KCTC 2358 / NCIMB 9240 / NCTC 8049).